The chain runs to 192 residues: UPF0149 protein YgfB (192 aa).

This sequence belongs to the UPF0149 family.

The sequence is that of UPF0149 protein YgfB from Escherichia coli O127:H6 (strain E2348/69 / EPEC).